The following is a 746-amino-acid chain: Exostosin-1 (746 aa).

The Cytoplasmic portion of the chain corresponds to 1 to 5 (MQAKK). The helical; Signal-anchor for type II membrane protein transmembrane segment at 6 to 26 (RYFILLSAGSCLALLFYFGGV) threads the bilayer. Residues 27–746 (QFRASRSHSR…RKKYRDIERL (720 aa)) lie on the Lumenal side of the membrane. N-linked (GlcNAc...) asparagine glycosylation occurs at asparagine 89. 2 disulfide bridges follow: cysteine 98–cysteine 103 and cysteine 109–cysteine 152. A protein-binding residues include leucine 166 and tyrosine 203. Residues lysine 267, lysine 269, tyrosine 271, and arginine 280 each contribute to the UDP site. An intrachain disulfide couples cysteine 298 to cysteine 312. A protein is bound at residue histidine 300. UDP-binding residues include tyrosine 319 and tyrosine 324. N-linked (GlcNAc...) asparagine glycosylation occurs at asparagine 330. 2 disulfide bridges follow: cysteine 334–cysteine 355 and cysteine 652–cysteine 704. UDP-binding residues include arginine 346 and glutamate 349.

The protein belongs to the glycosyltransferase 47 family. As to quaternary structure, part of the heparan sulfate polymerase, a dimeric complex composed of EXT1 and EXT2. Could also form homooligomeric complexes. Interacts with NDST1. N-glycosylated.

It is found in the golgi apparatus membrane. Its subcellular location is the golgi apparatus. It localises to the cis-Golgi network membrane. The protein resides in the endoplasmic reticulum membrane. The enzyme catalyses 3-O-{alpha-D-GlcNAc-[(1-&gt;4)-beta-D-GlcA-(1-&gt;4)-alpha-D-GlcNAc](n)-(1-&gt;4)-beta-D-GlcA-(1-&gt;3)-beta-D-Gal-(1-&gt;3)-beta-D-Gal-(1-&gt;4)-beta-D-Xyl}-L-seryl-[protein] + UDP-alpha-D-glucuronate = 3-O-{[(1-&gt;4)-beta-D-GlcA-(1-&gt;4)-alpha-D-GlcNAc](n+1)-(1-&gt;4)-beta-D-GlcA-(1-&gt;3)-beta-D-Gal-(1-&gt;3)-beta-D-Gal-(1-&gt;4)-beta-D-Xyl}-L-seryl-[protein] + UDP + H(+). It functions in the pathway protein modification; protein glycosylation. Functionally, glycosyltransferase forming with EXT2 the heterodimeric heparan sulfate polymerase which catalyzes the elongation of the heparan sulfate glycan backbone. Glycan backbone extension consists in the alternating transfer of (1-&gt;4)-beta-D-GlcA and (1-&gt;4)-alpha-D-GlcNAc residues from their respective UDP-sugar donors. Both EXT1 and EXT2 are required for the full activity of the polymerase since EXT1 bears the N-acetylglucosaminyl-proteoglycan 4-beta-glucuronosyltransferase activity within the complex while EXT2 carries the glucuronosyl-N-acetylglucosaminyl-proteoglycan 4-alpha-N-acetylglucosaminyltransferase activity. Heparan sulfate proteoglycans are ubiquitous components of the extracellular matrix and play an important role in tissue homeostasis and signaling. In Cricetulus griseus (Chinese hamster), this protein is Exostosin-1.